A 311-amino-acid polypeptide reads, in one-letter code: Probable manganese-dependent inorganic pyrophosphatase (311 aa).

Positions 9, 13, 15, 75, 97, and 149 each coordinate Mn(2+).

Belongs to the PPase class C family. Requires Mn(2+) as cofactor.

It localises to the cytoplasm. It catalyses the reaction diphosphate + H2O = 2 phosphate + H(+). This Lactobacillus gasseri (strain ATCC 33323 / DSM 20243 / BCRC 14619 / CIP 102991 / JCM 1131 / KCTC 3163 / NCIMB 11718 / NCTC 13722 / AM63) protein is Probable manganese-dependent inorganic pyrophosphatase.